The sequence spans 481 residues: Alpha-ketoglutaric semialdehyde dehydrogenase 1 (481 aa).

Residues 154-155, 178-181, and 231-232 each bind NADP(+); these read WN, KAPE, and GS. Residue E253 is the Proton acceptor of the active site. L254 is an NADP(+) binding site. The Nucleophile role is filled by C287. An NADP(+)-binding site is contributed by E384.

It belongs to the aldehyde dehydrogenase family. In terms of assembly, homotetramer.

The enzyme catalyses 2,5-dioxopentanoate + NADP(+) + H2O = 2-oxoglutarate + NADPH + 2 H(+). The catalysed reaction is 2,5-dioxopentanoate + NAD(+) + H2O = 2-oxoglutarate + NADH + 2 H(+). It catalyses the reaction succinate semialdehyde + NAD(+) + H2O = succinate + NADH + 2 H(+). Catalyzes the NAD(P)(+)-dependent oxidation of alpha-ketoglutaric semialdehyde (alphaKGSA) to alpha-ketoglutarate. Is involved in a degradation pathway of L-arabinose that allows A.brasilense to grow on L-arabinose as a sole carbon source. Prefers NAD(+) to NADP(+) as a cosubstrate. Displays broad substrate specificity: exhibits the highest activity with alphaKGSA and succinic semialdehyde as substrates, but to a lesser extent, is also active with glutaraldehyde, benzaldehyde, and a number of aldehydes from C3 to C8. The chain is Alpha-ketoglutaric semialdehyde dehydrogenase 1 (araE) from Azospirillum brasilense.